The chain runs to 61 residues: Short neurotoxin 1 (61 aa).

4 cysteine pairs are disulfide-bonded: Cys-3–Cys-23, Cys-17–Cys-40, Cys-42–Cys-53, and Cys-54–Cys-59.

It belongs to the three-finger toxin family. Short-chain subfamily. Type I alpha-neurotoxin sub-subfamily. In terms of tissue distribution, expressed by the venom gland.

It is found in the secreted. Its function is as follows. Binds with high affinity to muscular nicotinic acetylcholine receptors (nAChRs) (tested on Torpedo marmorata AChR, Kd=0.07 nM) and with low affinity to neuronal alpha-7/CHRNA7 nAChRs (tested on chimeric receptor, Kd=3 uM) and inhibit acetylcholine from binding to the receptor, thereby impairing neuromuscular transmission. Produces peripheral paralysis by blocking neuromuscular transmission at the postsynaptic site. The polypeptide is Short neurotoxin 1 (Naja pallida (Red spitting cobra)).